Here is a 200-residue protein sequence, read N- to C-terminus: Nucleoside triphosphate pyrophosphatase (200 aa).

Asp75 serves as the catalytic Proton acceptor.

This sequence belongs to the Maf family. A divalent metal cation serves as cofactor.

It is found in the cytoplasm. It catalyses the reaction a ribonucleoside 5'-triphosphate + H2O = a ribonucleoside 5'-phosphate + diphosphate + H(+). The enzyme catalyses a 2'-deoxyribonucleoside 5'-triphosphate + H2O = a 2'-deoxyribonucleoside 5'-phosphate + diphosphate + H(+). Nucleoside triphosphate pyrophosphatase. May have a dual role in cell division arrest and in preventing the incorporation of modified nucleotides into cellular nucleic acids. In Synechococcus sp. (strain CC9311), this protein is Nucleoside triphosphate pyrophosphatase.